Consider the following 130-residue polypeptide: Small ribosomal subunit protein uS8 (130 aa).

It belongs to the universal ribosomal protein uS8 family. As to quaternary structure, part of the 30S ribosomal subunit.

One of the primary rRNA binding proteins, it binds directly to 16S rRNA central domain where it helps coordinate assembly of the platform of the 30S subunit. The protein is Small ribosomal subunit protein uS8 of Pyrobaculum arsenaticum (strain DSM 13514 / JCM 11321 / PZ6).